A 354-amino-acid chain; its full sequence is Uroporphyrinogen decarboxylase (354 aa).

Substrate-binding positions include 27–31, Asp-77, Tyr-154, Thr-209, and His-327; that span reads RQAGR.

This sequence belongs to the uroporphyrinogen decarboxylase family. Homodimer.

It localises to the cytoplasm. It carries out the reaction uroporphyrinogen III + 4 H(+) = coproporphyrinogen III + 4 CO2. Its pathway is porphyrin-containing compound metabolism; protoporphyrin-IX biosynthesis; coproporphyrinogen-III from 5-aminolevulinate: step 4/4. In terms of biological role, catalyzes the decarboxylation of four acetate groups of uroporphyrinogen-III to yield coproporphyrinogen-III. This is Uroporphyrinogen decarboxylase from Pseudomonas entomophila (strain L48).